The following is a 423-amino-acid chain: Histidine--tRNA ligase (423 aa).

It belongs to the class-II aminoacyl-tRNA synthetase family. As to quaternary structure, homodimer.

The protein resides in the cytoplasm. It carries out the reaction tRNA(His) + L-histidine + ATP = L-histidyl-tRNA(His) + AMP + diphosphate + H(+). This Bacillus cytotoxicus (strain DSM 22905 / CIP 110041 / 391-98 / NVH 391-98) protein is Histidine--tRNA ligase.